The sequence spans 75 residues: Small ribosomal subunit protein bS18c (75 aa).

This sequence belongs to the bacterial ribosomal protein bS18 family. As to quaternary structure, part of the 30S ribosomal subunit.

Its subcellular location is the plastid. The polypeptide is Small ribosomal subunit protein bS18c (Aneura mirabilis (Parasitic liverwort)).